Reading from the N-terminus, the 697-residue chain is Polyribonucleotide nucleotidyltransferase (697 aa).

Residues aspartate 490 and aspartate 496 each contribute to the Mg(2+) site. Residues 557 to 616 enclose the KH domain; that stretch reads PKVVTMTIKPEKIRDVIGPGGKKINEIIDETGVKLDIEQDGTIFIGAVDKDAIARARSII. One can recognise an S1 motif domain in the interval 626 to 694; that stretch reads GQVYEGKVKR…KQGRVNASHK (69 aa).

The protein belongs to the polyribonucleotide nucleotidyltransferase family. Mg(2+) serves as cofactor.

Its subcellular location is the cytoplasm. It catalyses the reaction RNA(n+1) + phosphate = RNA(n) + a ribonucleoside 5'-diphosphate. Functionally, involved in mRNA degradation. Catalyzes the phosphorolysis of single-stranded polyribonucleotides processively in the 3'- to 5'-direction. This chain is Polyribonucleotide nucleotidyltransferase, found in Staphylococcus saprophyticus subsp. saprophyticus (strain ATCC 15305 / DSM 20229 / NCIMB 8711 / NCTC 7292 / S-41).